The chain runs to 689 residues: Elongation factor G (689 aa).

The tr-type G domain maps to 9 to 283 (AKFRNIGIMA…AIIEFMPSPL (275 aa)). GTP contacts are provided by residues 18–25 (AHIDAGKT), 82–86 (DTPGH), and 136–139 (NKMD).

Belongs to the TRAFAC class translation factor GTPase superfamily. Classic translation factor GTPase family. EF-G/EF-2 subfamily.

It is found in the cytoplasm. Functionally, catalyzes the GTP-dependent ribosomal translocation step during translation elongation. During this step, the ribosome changes from the pre-translocational (PRE) to the post-translocational (POST) state as the newly formed A-site-bound peptidyl-tRNA and P-site-bound deacylated tRNA move to the P and E sites, respectively. Catalyzes the coordinated movement of the two tRNA molecules, the mRNA and conformational changes in the ribosome. This chain is Elongation factor G, found in Clostridium botulinum (strain Okra / Type B1).